The primary structure comprises 423 residues: GTPase HflX (423 aa).

Positions 202-366 constitute a Hflx-type G domain; sequence PAAAIVGYTN…LLETILRNQK (165 aa). Residues 208 to 215, 233 to 237, 255 to 258, 321 to 324, and 344 to 346 each bind GTP; these read GYTNAGKS, FATLD, DTVG, NKID, and SAK. Mg(2+) is bound by residues Ser-215 and Thr-235.

It belongs to the TRAFAC class OBG-HflX-like GTPase superfamily. HflX GTPase family. As to quaternary structure, monomer. Associates with the 50S ribosomal subunit. Mg(2+) serves as cofactor.

It localises to the cytoplasm. In terms of biological role, GTPase that associates with the 50S ribosomal subunit and may have a role during protein synthesis or ribosome biogenesis. This Lacrimispora saccharolytica (strain ATCC 35040 / DSM 2544 / NRCC 2533 / WM1) (Clostridium saccharolyticum) protein is GTPase HflX.